Reading from the N-terminus, the 512-residue chain is MMLSEQAQKWFPTHVQVTVLQAKDLKPKGKSGTNDTYTIIQLGKEKYSTSVAEKTLEPVWKEEASFELPGLLMQGSPEKYILFLIVMHRSLVGLDKFLGQVAINLNDIFEDKQRRKTEWFRLESKQGKRIKNRGEIKVNIQFMRNNMTASMFDLSMKDKTRSPFAKLKDKMKGRKSDGVFSDTSSAIVPSTHMPDANPEFSSGEMQMKSKPKKPFLLGPQRLSSAHSMSDLTGSHLSSEKLKSSTVGPTHLLSRQIDSFGVVPESGSLKSPHRRTLSFDTSKLNQPGSIVDEGEHSFGRQSDPFTNVTASLPQKFATLPRKKNPFEESSEPWDSSMNLFSKPIEVRKESKREKREKVSLFERVTGKRDSRRPDKLNNGGSDSPCDLKSPSAFSENRQDYFEYESTNPFTAKFRASTIMPSSSFHVNPTSSEDLRKIPDNNPFDATAGYRSLTYEEVLQELVKHKELLRRKDTHIRELEDYIDNLLVRVMEETPSILRVPYEPSRKAGKFTNS.

The C2 domain maps to 1-120 (MMLSEQAQKW…DKQRRKTEWF (120 aa)). The interval 15-102 (VQVTVLQAKD…GLDKFLGQVA (88 aa)) is necessary for its cellular translocation to the plasma membrane. 2 disordered regions span residues 174-231 (RKSD…MSDL) and 263-287 (PESG…NQPG). 2 stretches are compositionally biased toward polar residues: residues 221–231 (RLSSAHSMSDL) and 277–287 (SFDTSKLNQPG). S227 is modified (phosphoserine; by MARK2). At S277 the chain carries Phosphoserine. Residues 323-325 (NPF) carry the NPF 1 motif. Basic and acidic residues predominate over residues 347-374 (KESKREKREKVSLFERVTGKRDSRRPDK). A disordered region spans residues 347–390 (KESKREKREKVSLFERVTGKRDSRRPDKLNNGGSDSPCDLKSPS). Short sequence motifs (NPF) lie at residues 406 to 408 (NPF) and 440 to 442 (NPF). An FIP-RBD domain is found at 437 to 499 (PDNNPFDATA…EETPSILRVP (63 aa)). A necessary for interaction with AP2A1, RAB11A, subcellular location, endocytosis activity and homooligomerization region spans residues 465-512 (ELLRRKDTHIRELEDYIDNLLVRVMEETPSILRVPYEPSRKAGKFTNS).

In terms of assembly, homooligomerizes in a Rab11-independent manner. Forms a heterooligomeric complex with RAB11FIP4. Interacts with AP2A1, MYO5B, RAB25 and REPS1. Interacts with RAB11A and RAB11B (activated GTP-bound form). Interacts with NPC1L1. Interacts (via NPF motifs) with EHD1 and EHD3. Interacts with TICAM2; this interaction directs RAB11FIP2 to the phagosome. Interacts with RAB14 and RAB25 (GTP-bound forms). In terms of processing, phosphorylation at Ser-227 by MARK2 regulates epithelial cell polarity.

Its subcellular location is the cell membrane. The protein localises to the recycling endosome membrane. Functionally, a Rab11 effector binding preferentially phosphatidylinositol 3,4,5-trisphosphate (PtdInsP3) and phosphatidic acid (PA) and acting in the regulation of the transport of vesicles from the endosomal recycling compartment (ERC) to the plasma membrane. Involved in insulin granule exocytosis. Also involved in receptor-mediated endocytosis and membrane trafficking of recycling endosomes, probably originating from clathrin-coated vesicles. Required in a complex with MYO5B and RAB11 for the transport of NPC1L1 to the plasma membrane. Also acts as a regulator of cell polarity. Plays an essential role in phagocytosis through a mechanism involving TICAM2, RAC1 and CDC42 Rho GTPases for controlling actin-dynamics. The polypeptide is Rab11 family-interacting protein 2 (Rab11fip2) (Mus musculus (Mouse)).